A 509-amino-acid chain; its full sequence is Activin receptor type-1 (509 aa).

The first 20 residues, 1-20 (MVDGVMILPVLIMIALPSPS), serve as a signal peptide directing secretion. The Extracellular segment spans residues 21 to 123 (MEDEKPKVNP…FPGTQNFHLE (103 aa)). A glycan (N-linked (GlcNAc...) asparagine) is linked at Asn102. The helical transmembrane segment at 124–146 (VGLIILSVVFAVCLLACLLGVAL) threads the bilayer. Residues 147-509 (RKFKRRNQER…NSLDKLKTDC (363 aa)) lie on the Cytoplasmic side of the membrane. The region spanning 178–207 (STLADLLDHSCTSGSGSGLPFLVQRTVARQ) is the GS domain. The Protein kinase domain occupies 208–502 (ITLLECVGKG…KTLTKIDNSL (295 aa)). Residues 214–222 (VGKGRYGEV) and Lys235 contribute to the ATP site. Catalysis depends on Asp336, which acts as the Proton acceptor. Residue Ser501 is modified to Phosphoserine.

It belongs to the protein kinase superfamily. TKL Ser/Thr protein kinase family. TGFB receptor subfamily. As to quaternary structure, interacts with FKBP1A. Interacts with FCHO1. Interacts with CLU. Interacts with type II receptors AMHR2 and ACVR2A. Interacts with BMP7. Interacts with GDF2/BMP9. Interacts with BMP6 (when glycosylated); the interaction may induce HAMP expression. Interacts with TSC22D1/TSC-22. The cofactor is Mg(2+). Requires Mn(2+) as cofactor. Expressed in normal parenchymal cells, endothelial cells, fibroblasts and tumor-derived epithelial cells.

It is found in the membrane. The catalysed reaction is L-threonyl-[receptor-protein] + ATP = O-phospho-L-threonyl-[receptor-protein] + ADP + H(+). It catalyses the reaction L-seryl-[receptor-protein] + ATP = O-phospho-L-seryl-[receptor-protein] + ADP + H(+). Functionally, bone morphogenetic protein (BMP) type I receptor that is involved in a wide variety of biological processes, including bone, heart, cartilage, nervous, and reproductive system development and regulation. As a type I receptor, forms heterotetrameric receptor complexes with the type II receptors AMHR2, ACVR2A or ACVR2B. Upon binding of ligands such as BMP7 or GDF2/BMP9 to the heteromeric complexes, type II receptors transphosphorylate ACVR1 intracellular domain. In turn, ACVR1 kinase domain is activated and subsequently phosphorylates SMAD1/5/8 proteins that transduce the signal. In addition to its role in mediating BMP pathway-specific signaling, suppresses TGFbeta/activin pathway signaling by interfering with the binding of activin to its type II receptor. Besides canonical SMAD signaling, can activate non-canonical pathways such as p38 mitogen-activated protein kinases/MAPKs. May promote the expression of HAMP, potentially via its interaction with BMP6. This Homo sapiens (Human) protein is Activin receptor type-1 (ACVR1).